Consider the following 160-residue polypeptide: MGGFRAVIYYLLAAAVIALDQWTKWLVVRYMQLGESIPMIDNVLYITSHRNRGAAWGMLQGQFWLFYLVTVIVVAGIIIYIRRLRPSERLAGIGLGLMLGGAIGNFIDRVFRKEVVDFIHTYIGTYSFPVFNIADSALTVGVILLFIHMFFFATPEKGNE.

3 consecutive transmembrane segments (helical) span residues 7 to 27 (VIYY…KWLV), 61 to 81 (GQFW…IIYI), and 91 to 111 (AGIG…DRVF). Residues aspartate 117 and aspartate 135 contribute to the active site. The chain crosses the membrane as a helical span at residues 133–153 (IADSALTVGVILLFIHMFFFA).

This sequence belongs to the peptidase A8 family.

The protein resides in the cell membrane. It carries out the reaction Release of signal peptides from bacterial membrane prolipoproteins. Hydrolyzes -Xaa-Yaa-Zaa-|-(S,diacylglyceryl)Cys-, in which Xaa is hydrophobic (preferably Leu), and Yaa (Ala or Ser) and Zaa (Gly or Ala) have small, neutral side chains.. It functions in the pathway protein modification; lipoprotein biosynthesis (signal peptide cleavage). In terms of biological role, this protein specifically catalyzes the removal of signal peptides from prolipoproteins. The polypeptide is Lipoprotein signal peptidase (Geobacillus thermodenitrificans (strain NG80-2)).